Reading from the N-terminus, the 475-residue chain is Aspartyl/glutamyl-tRNA(Asn/Gln) amidotransferase subunit B (475 aa).

This sequence belongs to the GatB/GatE family. GatB subfamily. In terms of assembly, heterotrimer of A, B and C subunits.

The catalysed reaction is L-glutamyl-tRNA(Gln) + L-glutamine + ATP + H2O = L-glutaminyl-tRNA(Gln) + L-glutamate + ADP + phosphate + H(+). It carries out the reaction L-aspartyl-tRNA(Asn) + L-glutamine + ATP + H2O = L-asparaginyl-tRNA(Asn) + L-glutamate + ADP + phosphate + 2 H(+). In terms of biological role, allows the formation of correctly charged Asn-tRNA(Asn) or Gln-tRNA(Gln) through the transamidation of misacylated Asp-tRNA(Asn) or Glu-tRNA(Gln) in organisms which lack either or both of asparaginyl-tRNA or glutaminyl-tRNA synthetases. The reaction takes place in the presence of glutamine and ATP through an activated phospho-Asp-tRNA(Asn) or phospho-Glu-tRNA(Gln). The polypeptide is Aspartyl/glutamyl-tRNA(Asn/Gln) amidotransferase subunit B (Bacillus cereus (strain B4264)).